The primary structure comprises 242 residues: Uridylate kinase (242 aa).

11–14 (KLSG) is an ATP binding site. The tract at residues 19 to 24 (GEKGVG) is involved in allosteric activation by GTP. Residue G53 coordinates UMP. Residues G54 and R58 each coordinate ATP. Residues D73 and 134–141 (IGSPYFST) each bind UMP. ATP contacts are provided by N162, Y168, and D171.

This sequence belongs to the UMP kinase family. Homohexamer.

Its subcellular location is the cytoplasm. It carries out the reaction UMP + ATP = UDP + ADP. Its pathway is pyrimidine metabolism; CTP biosynthesis via de novo pathway; UDP from UMP (UMPK route): step 1/1. Its activity is regulated as follows. Allosterically activated by GTP. Inhibited by UTP. Functionally, catalyzes the reversible phosphorylation of UMP to UDP. The sequence is that of Uridylate kinase from Streptococcus pyogenes serotype M1.